Consider the following 324-residue polypeptide: MGRSPCCEKKNGLKKGPWTPEEDQKLIDYINIHGYGNWRTLPKNAGLQRCGKSCRLRWTNYLRPDIKRGRFSFEEEETIIQLHSIMGNKWSAIAARLPGRTDNEIKNYWNTHIRKRLLKMGIDPVTHTPRLDLLDISSILSSSIYNSSHHHHHHHQQHMNMSRLMMSDGNHQPLVNPEILKLATSLFSNQNHPNNTHENNTVNQTEVNQYQTGYNMPGNEELQSWFPIMDQFTNFQDLMPMKTTVQNSLSYDDDCSKSNFVLEPYYSDFASVLTTPSSSPTPLNSSSSTYINSSTCSTEDEKESYYSDNITNYSFDVNGFLQFQ.

2 HTH myb-type domains span residues 10–62 (KNGL…TNYL) and 63–117 (RPDI…RKRL). DNA-binding regions (H-T-H motif) lie at residues 38 to 62 (WRTL…TNYL) and 90 to 113 (WSAI…NTHI).

As to expression, highly expressed in flowers and at lower levels in rosette leaves and cauline leaves. Expressed at low levels in roots, stems and siliques.

The protein localises to the nucleus. In terms of biological role, probable transcription factor that may function in salt stress response. The sequence is that of Transcription factor MYB74 from Arabidopsis thaliana (Mouse-ear cress).